The chain runs to 205 residues: Probable molybdenum cofactor guanylyltransferase (205 aa).

GTP-binding positions include 10–12 (LAG), K22, D69, and D100. D100 contacts Mg(2+).

Belongs to the MobA family. The cofactor is Mg(2+).

Its subcellular location is the cytoplasm. It carries out the reaction Mo-molybdopterin + GTP + H(+) = Mo-molybdopterin guanine dinucleotide + diphosphate. Its function is as follows. Transfers a GMP moiety from GTP to Mo-molybdopterin (Mo-MPT) cofactor (Moco or molybdenum cofactor) to form Mo-molybdopterin guanine dinucleotide (Mo-MGD) cofactor. In Natranaerobius thermophilus (strain ATCC BAA-1301 / DSM 18059 / JW/NM-WN-LF), this protein is Probable molybdenum cofactor guanylyltransferase.